The chain runs to 293 residues: Cytochrome c biogenesis protein CcsA (293 aa).

A run of 8 helical transmembrane segments spans residues 12–32, 39–59, 78–98, 99–119, 142–162, 216–236, 250–267, and 273–293; these read INILAFLGALVSSLFYWAKLT, VFSLPKFCLIFSNCIIAGMLL, LFLSWVLNIITIIFVDKLSII, GAIGSSAVTLIIGYANYILPP, VMIFSYGLLIMGAFLSLIYVI, FISLGFISLTLGIISGSVWAN, TWALITWLVFATYLHIRI, and KIYASLVASLGLIVICFVTWE.

Belongs to the CcmF/CycK/Ccl1/NrfE/CcsA family. As to quaternary structure, may interact with Ccs1.

It localises to the plastid. The protein localises to the chloroplast thylakoid membrane. Required during biogenesis of c-type cytochromes (cytochrome c6 and cytochrome f) at the step of heme attachment. This is Cytochrome c biogenesis protein CcsA from Cyanidium caldarium (Red alga).